The primary structure comprises 541 residues: Cyclin-T1-4 (541 aa).

Positions Val277–Gly366 are disordered. Residues Ser307–Gly325 are compositionally biased toward polar residues. The segment covering Gln336–Pro354 has biased composition (basic and acidic residues). At Ser396 the chain carries Phosphoserine. A disordered region spans residues Glu445 to Arg541. Residues Met493–Ser511 are compositionally biased toward basic and acidic residues. Over residues Lys519–Ser528 the composition is skewed to polar residues. Residues Tyr529–Arg541 are compositionally biased toward basic and acidic residues.

It belongs to the cyclin family. Cyclin T subfamily.

This chain is Cyclin-T1-4 (CYCT1-4), found in Arabidopsis thaliana (Mouse-ear cress).